The following is a 331-amino-acid chain: 4-hydroxy-3-methylbut-2-enyl diphosphate reductase (331 aa).

Cysteine 12 serves as a coordination point for [4Fe-4S] cluster. 2 residues coordinate (2E)-4-hydroxy-3-methylbut-2-enyl diphosphate: histidine 43 and histidine 81. Positions 43 and 81 each coordinate dimethylallyl diphosphate. Isopentenyl diphosphate is bound by residues histidine 43 and histidine 81. Residue cysteine 103 participates in [4Fe-4S] cluster binding. Histidine 131 is a (2E)-4-hydroxy-3-methylbut-2-enyl diphosphate binding site. Histidine 131 provides a ligand contact to dimethylallyl diphosphate. Histidine 131 serves as a coordination point for isopentenyl diphosphate. The active-site Proton donor is the glutamate 133. Threonine 170 lines the (2E)-4-hydroxy-3-methylbut-2-enyl diphosphate pocket. Cysteine 198 contributes to the [4Fe-4S] cluster binding site. The (2E)-4-hydroxy-3-methylbut-2-enyl diphosphate site is built by serine 226, asparagine 228, and serine 271. Serine 226, asparagine 228, and serine 271 together coordinate dimethylallyl diphosphate. Isopentenyl diphosphate contacts are provided by serine 226, asparagine 228, and serine 271.

The protein belongs to the IspH family. [4Fe-4S] cluster is required as a cofactor.

The enzyme catalyses isopentenyl diphosphate + 2 oxidized [2Fe-2S]-[ferredoxin] + H2O = (2E)-4-hydroxy-3-methylbut-2-enyl diphosphate + 2 reduced [2Fe-2S]-[ferredoxin] + 2 H(+). The catalysed reaction is dimethylallyl diphosphate + 2 oxidized [2Fe-2S]-[ferredoxin] + H2O = (2E)-4-hydroxy-3-methylbut-2-enyl diphosphate + 2 reduced [2Fe-2S]-[ferredoxin] + 2 H(+). It functions in the pathway isoprenoid biosynthesis; dimethylallyl diphosphate biosynthesis; dimethylallyl diphosphate from (2E)-4-hydroxy-3-methylbutenyl diphosphate: step 1/1. The protein operates within isoprenoid biosynthesis; isopentenyl diphosphate biosynthesis via DXP pathway; isopentenyl diphosphate from 1-deoxy-D-xylulose 5-phosphate: step 6/6. Catalyzes the conversion of 1-hydroxy-2-methyl-2-(E)-butenyl 4-diphosphate (HMBPP) into a mixture of isopentenyl diphosphate (IPP) and dimethylallyl diphosphate (DMAPP). Acts in the terminal step of the DOXP/MEP pathway for isoprenoid precursor biosynthesis. In Listeria monocytogenes serovar 1/2a (strain ATCC BAA-679 / EGD-e), this protein is 4-hydroxy-3-methylbut-2-enyl diphosphate reductase.